The sequence spans 145 residues: Ribosomal RNA large subunit methyltransferase H (145 aa).

Residues Gly94 and 113–118 (LSPLTF) each bind S-adenosyl-L-methionine.

The protein belongs to the RNA methyltransferase RlmH family. In terms of assembly, homodimer.

The protein resides in the cytoplasm. It carries out the reaction pseudouridine(1915) in 23S rRNA + S-adenosyl-L-methionine = N(3)-methylpseudouridine(1915) in 23S rRNA + S-adenosyl-L-homocysteine + H(+). Its function is as follows. Specifically methylates the pseudouridine at position 1915 (m3Psi1915) in 23S rRNA. The polypeptide is Ribosomal RNA large subunit methyltransferase H (Sorangium cellulosum (strain So ce56) (Polyangium cellulosum (strain So ce56))).